The chain runs to 619 residues: Chaperone protein HscA homolog (619 aa).

Belongs to the heat shock protein 70 family.

In terms of biological role, chaperone involved in the maturation of iron-sulfur cluster-containing proteins. Has a low intrinsic ATPase activity which is markedly stimulated by HscB. The chain is Chaperone protein HscA homolog from Shewanella amazonensis (strain ATCC BAA-1098 / SB2B).